A 421-amino-acid polypeptide reads, in one-letter code: Medium-chain specific acyl-CoA dehydrogenase, mitochondrial (421 aa).

Residues methionine 1–threonine 25 constitute a mitochondrion transit peptide. At lysine 79 the chain carries N6-acetyllysine. Tyrosine 158 to serine 167 contributes to the FAD binding site. Serine 167 lines the octanoyl-CoA pocket. N6-succinyllysine is present on lysine 179. FAD is bound at residue tryptophan 191–threonine 193. The residue at position 212 (lysine 212) is an N6-acetyllysine; alternate. Lysine 212 is modified (N6-succinyllysine; alternate). Serine 216 is an octanoyl-CoA binding site. Lysine 217, lysine 259, and lysine 271 each carry N6-acetyllysine; alternate. N6-succinyllysine; alternate occurs at positions 217, 259, and 271. Aspartate 278 contributes to the octanoyl-CoA binding site. Lysine 279 carries the N6-acetyllysine modification. Arginine 281 contributes to the octanoyl-CoA binding site. Lysine 301 carries the post-translational modification N6-acetyllysine. Residues arginine 306 to threonine 308 and histidine 316 to glutamine 317 each bind FAD. Octanoyl-CoA is bound by residues arginine 349 and threonine 351. Threonine 351 is modified (phosphothreonine). Position 374 to 378 (glutamine 374 to glycine 378) interacts with FAD. Residue glutamate 401 coordinates octanoyl-CoA. Glutamate 401 serves as the catalytic Proton acceptor. Glycine 402–glutamine 405 is an FAD binding site.

The protein belongs to the acyl-CoA dehydrogenase family. In terms of assembly, homotetramer. Interacts with the heterodimeric electron transfer flavoprotein ETF. It depends on FAD as a cofactor. Acetylated. Could occur at proximity of the cofactor-binding sites and reduce the catalytic activity. Could be deacetylated by SIRT3.

The protein resides in the mitochondrion matrix. The enzyme catalyses a medium-chain 2,3-saturated fatty acyl-CoA + oxidized [electron-transfer flavoprotein] + H(+) = a medium-chain (2E)-enoyl-CoA + reduced [electron-transfer flavoprotein]. It carries out the reaction pentanoyl-CoA + oxidized [electron-transfer flavoprotein] + H(+) = (2E)-pentenoyl-CoA + reduced [electron-transfer flavoprotein]. The catalysed reaction is hexanoyl-CoA + oxidized [electron-transfer flavoprotein] + H(+) = (2E)-hexenoyl-CoA + reduced [electron-transfer flavoprotein]. It catalyses the reaction octanoyl-CoA + oxidized [electron-transfer flavoprotein] + H(+) = (2E)-octenoyl-CoA + reduced [electron-transfer flavoprotein]. The enzyme catalyses decanoyl-CoA + oxidized [electron-transfer flavoprotein] + H(+) = (2E)-decenoyl-CoA + reduced [electron-transfer flavoprotein]. It carries out the reaction dodecanoyl-CoA + oxidized [electron-transfer flavoprotein] + H(+) = (2E)-dodecenoyl-CoA + reduced [electron-transfer flavoprotein]. The catalysed reaction is tetradecanoyl-CoA + oxidized [electron-transfer flavoprotein] + H(+) = (2E)-tetradecenoyl-CoA + reduced [electron-transfer flavoprotein]. It catalyses the reaction oxidized [electron-transfer flavoprotein] + hexadecanoyl-CoA + H(+) = (2E)-hexadecenoyl-CoA + reduced [electron-transfer flavoprotein]. It functions in the pathway lipid metabolism; mitochondrial fatty acid beta-oxidation. Medium-chain specific acyl-CoA dehydrogenase is one of the acyl-CoA dehydrogenases that catalyze the first step of mitochondrial fatty acid beta-oxidation, an aerobic process breaking down fatty acids into acetyl-CoA and allowing the production of energy from fats. The first step of fatty acid beta-oxidation consists in the removal of one hydrogen from C-2 and C-3 of the straight-chain fatty acyl-CoA thioester, resulting in the formation of trans-2-enoyl-CoA. Electron transfer flavoprotein (ETF) is the electron acceptor that transfers electrons to the main mitochondrial respiratory chain via ETF-ubiquinone oxidoreductase (ETF dehydrogenase). Among the different mitochondrial acyl-CoA dehydrogenases, medium-chain specific acyl-CoA dehydrogenase acts specifically on acyl-CoAs with saturated 6 to 12 carbons long primary chains. This is Medium-chain specific acyl-CoA dehydrogenase, mitochondrial from Sus scrofa (Pig).